The chain runs to 360 residues: MLVWLAEYLTQYYTGFNVFSYLTLRAILGILTALMMSLYLGPKLIRALQRMQIGQTVRDDGPQSHLSKSGTPTMGGLLILAAIFTSTLLWADLSNKYVWATLFVIGSLGVVGFVDDYRKVIRKDPKGLIAKWKYFWQSVIALVVACALFFTSTQANETSLVVPFFKDVLPQLGLFYIVITYFALVGTSNAVNLTDGLDGLAIVPTILVAAALAIIAYLTGNVNFSNYLHIPYLPLASELVVVCTAIVGAGLGFLWFNTYPAQVFMGDVGSLALGGALGIIAVLVRQELLLIIMGGVFVMEALSVILQVGSYKLRGQRIFRMAPIHHHYELKGWPEPRVIVRFWIISIVLVLAGLATLKIR.

10 helical membrane passes run 18–38 (VFSYLTLRAILGILTALMMSL), 73–93 (TMGGLLILAAIFTSTLLWADL), 97–117 (YVWATLFVIGSLGVVGFVDDY), 135–155 (FWQSVIALVVACALFFTSTQA), 168–188 (VLPQLGLFYIVITYFALVGTS), 199–219 (GLAIVPTILVAAALAIIAYLT), 236–256 (ASELVVVCTAIVGAGLGFLWF), 263–283 (VFMGDVGSLALGGALGIIAVL), 288–308 (LLLIIMGGVFVMEALSVILQV), and 339–359 (IVRFWIISIVLVLAGLATLKI).

It belongs to the glycosyltransferase 4 family. MraY subfamily. It depends on Mg(2+) as a cofactor.

The protein localises to the cell inner membrane. It carries out the reaction UDP-N-acetyl-alpha-D-muramoyl-L-alanyl-gamma-D-glutamyl-meso-2,6-diaminopimeloyl-D-alanyl-D-alanine + di-trans,octa-cis-undecaprenyl phosphate = di-trans,octa-cis-undecaprenyl diphospho-N-acetyl-alpha-D-muramoyl-L-alanyl-D-glutamyl-meso-2,6-diaminopimeloyl-D-alanyl-D-alanine + UMP. It participates in cell wall biogenesis; peptidoglycan biosynthesis. Functionally, catalyzes the initial step of the lipid cycle reactions in the biosynthesis of the cell wall peptidoglycan: transfers peptidoglycan precursor phospho-MurNAc-pentapeptide from UDP-MurNAc-pentapeptide onto the lipid carrier undecaprenyl phosphate, yielding undecaprenyl-pyrophosphoryl-MurNAc-pentapeptide, known as lipid I. The chain is Phospho-N-acetylmuramoyl-pentapeptide-transferase from Pseudoalteromonas translucida (strain TAC 125).